A 459-amino-acid chain; its full sequence is Light-independent protochlorophyllide reductase subunit N (459 aa).

[4Fe-4S] cluster-binding residues include Cys-22, Cys-47, and Cys-107.

It belongs to the BchN/ChlN family. As to quaternary structure, protochlorophyllide reductase is composed of three subunits; ChlL, ChlN and ChlB. Forms a heterotetramer of two ChlB and two ChlN subunits. Requires [4Fe-4S] cluster as cofactor.

The protein resides in the plastid. The protein localises to the chloroplast. It carries out the reaction chlorophyllide a + oxidized 2[4Fe-4S]-[ferredoxin] + 2 ADP + 2 phosphate = protochlorophyllide a + reduced 2[4Fe-4S]-[ferredoxin] + 2 ATP + 2 H2O. The protein operates within porphyrin-containing compound metabolism; chlorophyll biosynthesis (light-independent). Its function is as follows. Component of the dark-operative protochlorophyllide reductase (DPOR) that uses Mg-ATP and reduced ferredoxin to reduce ring D of protochlorophyllide (Pchlide) to form chlorophyllide a (Chlide). This reaction is light-independent. The NB-protein (ChlN-ChlB) is the catalytic component of the complex. This Pinus contorta (Shore pine) protein is Light-independent protochlorophyllide reductase subunit N.